The chain runs to 128 residues: Z-ring associated protein G (128 aa).

Residues E7–M27 form a helical membrane-spanning segment. Residues Q37 to D75 adopt a coiled-coil conformation. The tract at residues N105–S128 is disordered. The span at A107–S119 shows a compositional bias: basic and acidic residues.

The protein belongs to the ZapG family. Homotetramer. In solution, is primarily monomeric but forms small amounts of stable tetramer and hexadecamer. The crystal structure of the cytosolic region shows a coiled-coil tetramer in the asymmetric unit that is very likely to be a physiologically relevant assembly of the protein.

It localises to the cell inner membrane. Functionally, involved in cell division, cell envelope biogenesis and cell shape maintenance. The polypeptide is Z-ring associated protein G (Haemophilus ducreyi (strain 35000HP / ATCC 700724)).